Reading from the N-terminus, the 425-residue chain is Orexin/Hypocretin receptor type 1 (425 aa).

Residues Met1–Glu46 lie on the Extracellular side of the membrane. The required for response to orexin-A stretch occupies residues Asp26–Tyr41. The helical transmembrane segment at Trp47–Val67 threads the bilayer. The Cytoplasmic portion of the chain corresponds to Cys68 to Asn82. Residues Tyr83–Leu105 form a helical membrane-spanning segment. Residues Val106–Cys119 are Extracellular-facing. An intrachain disulfide couples Cys119 to Cys202. The chain crosses the membrane as a helical span at residues Lys120–Ile140. Residues Ala141–Arg160 are Cytoplasmic-facing. The helical transmembrane segment at Ala161 to Val182 threads the bilayer. The Extracellular portion of the chain corresponds to Met183–Lys213. A helical membrane pass occupies residues Ile214–Tyr235. Topologically, residues Phe236–Lys298 are cytoplasmic. Residues Met299 to Lys321 traverse the membrane as a helical segment. At Arg322–Val336 the chain is on the extracellular side. A helical transmembrane segment spans residues Tyr337–Phe360. At Leu361–Pro425 the chain is on the cytoplasmic side.

Belongs to the G-protein coupled receptor 1 family.

It localises to the cell membrane. Its function is as follows. Moderately selective excitatory receptor for orexin-A and, with a lower affinity, for orexin-B neuropeptide. Triggers an increase in cytoplasmic Ca(2+) levels in response to orexin-A binding. This is Orexin/Hypocretin receptor type 1 from Sus scrofa (Pig).